Here is a 650-residue protein sequence, read N- to C-terminus: Chaperone protein HtpG (650 aa).

The interval 1-349 (MTKTTKKFET…SSDLPLNVSR (349 aa)) is a; substrate-binding. Residues 350–566 (EILQEDVQIK…EHGLNANMER (217 aa)) form a b region. Positions 567 to 650 (ILRAMNQDVP…VADGKAAAGE (84 aa)) are c.

Belongs to the heat shock protein 90 family. As to quaternary structure, homodimer.

Its subcellular location is the cytoplasm. Functionally, molecular chaperone. Has ATPase activity. This is Chaperone protein HtpG from Geobacter metallireducens (strain ATCC 53774 / DSM 7210 / GS-15).